Here is a 576-residue protein sequence, read N- to C-terminus: Arginine--tRNA ligase (576 aa).

Positions Ala126–His136 match the 'HIGH' region motif.

It belongs to the class-I aminoacyl-tRNA synthetase family. In terms of assembly, monomer.

It is found in the cytoplasm. It catalyses the reaction tRNA(Arg) + L-arginine + ATP = L-arginyl-tRNA(Arg) + AMP + diphosphate. This is Arginine--tRNA ligase from Rickettsia rickettsii (strain Iowa).